We begin with the raw amino-acid sequence, 251 residues long: Hydroxypyruvate/pyruvate aldolase (251 aa).

His-44 serves as the catalytic Proton acceptor. Arg-69 is a binding site for 3-hydroxypyruvate. Glu-145 is a binding site for Mg(2+). The 3-hydroxypyruvate site is built by Thr-170 and Asp-171. Residue Asp-171 coordinates Mg(2+).

This sequence belongs to the HpcH/HpaI aldolase family. In terms of assembly, homohexamer. Trimer of homodimers. The cofactor is Mn(2+). Requires Mg(2+) as cofactor. Co(2+) serves as cofactor. It depends on Zn(2+) as a cofactor.

The catalysed reaction is D-glyceraldehyde + 3-hydroxypyruvate = 2-dehydro-D-galactonate. It carries out the reaction D-glyceraldehyde + pyruvate = 2-dehydro-3-deoxy-L-galactonate. It catalyses the reaction L-glyceraldehyde + 3-hydroxypyruvate = (3S,4S,5S)-3,4,5,6-tetrahydroxy-2-oxohexanoate. The enzyme catalyses (R)-lactaldehyde + 3-hydroxypyruvate = (3S,4S,5R)-3,4,5-trihydroxy-2-oxohexanoate. The catalysed reaction is (R)-lactaldehyde + 3-hydroxypyruvate = (3S,4R,5R)-3,4,5-trihydroxy-2-oxohexanoate. It carries out the reaction (S)-lactaldehyde + 3-hydroxypyruvate = (3S,4S,5S)-3,4,5-trihydroxy-2-oxohexanoate. It catalyses the reaction D-erythrose + 3-hydroxypyruvate = (3S,4S,5R,6R)-3,4,5,6,7-pentahydroxy-2-oxoheptanoate. Its activity is regulated as follows. Binding of substrate induces a dynamic movement of the metal cofactor between an inactive coordination sphere to a catalytically active one. When oxaloacetate is used as substrate, activity is increased in the presence of micromolar concentrations of inorganic phosphate. The phosphate does not improve the binding of the substrate, but exclusively increases its rate of decarboxylation. Excessive phosphate concentrations negatively affect the reaction rate by removing the metal cofactor. Aldolase which can catalyze in vitro the aldolisation reaction between hydroxypyruvate (HPA) or pyruvate (PA) and D-glyceraldehyde (D-GA). The condensation of hydroxypyruvate and D-glyceraldehyde produces 2-dehydro-D-galactonate as the major product. The condensation of pyruvate and D-glyceraldehyde produces 2-dehydro-3-deoxy-L-galactonate. Can use other electrophilic substrates such as L-glyceraldehyde, D- and L-lactaldehyde and D-erythrose. Also catalyzes the retro-aldol type decarboxylation of oxaloacetate, a general property of known pyruvate aldolases. The protein is Hydroxypyruvate/pyruvate aldolase of Rhizorhabdus wittichii (strain DSM 6014 / CCUG 31198 / JCM 15750 / NBRC 105917 / EY 4224 / RW1) (Sphingomonas wittichii).